Reading from the N-terminus, the 562-residue chain is Nucleoprotein (562 aa).

The binding site for the cap structure m7GTP stretch occupies residues 53–238; it reads MRRDKRDESD…ITQEESQINI (186 aa). Residues Asp-381 and Glu-383 each coordinate Mn(2+). Residues Glu-391, Cys-498, His-501, and Cys-522 each coordinate Zn(2+). Residue Asp-526 coordinates Mn(2+).

This sequence belongs to the arenaviridae nucleocapsid protein family. As to quaternary structure, homomultimerizes to form the nucleocapsid. Binds to viral genomic RNA. Interacts with glycoprotein G2. Interacts with protein Z; this interaction probably directs the encapsidated genome to budding sites. Interacts with protein L; this interaction does not interfere with Z-L interaction. Interacts with host IKBKE (via Protein kinase domain); the interaction inhibits IKBKE kinase activity.

The protein resides in the virion. It is found in the host cytoplasm. Its function is as follows. Encapsidates the genome, protecting it from nucleases. The encapsidated genomic RNA is termed the nucleocapsid (NC). Serves as template for viral transcription and replication. The increased presence of protein N in host cell does not seem to trigger the switch from transcription to replication as observed in other negative strain RNA viruses. Through the interaction with host IKBKE, strongly inhibits the phosphorylation and nuclear translocation of host IRF3, a protein involved in interferon activation pathway, leading to the inhibition of interferon-beta and IRF3-dependent promoters activation. Also encodes a functional 3'-5' exoribonuclease that degrades preferentially dsRNA substrates and thereby participates in the suppression of interferon induction. This chain is Nucleoprotein, found in Bear Canyon mammarenavirus (isolate Mouse/United States/AV A0070039/2000) (BCNV).